The primary structure comprises 318 residues: Methionyl-tRNA formyltransferase (318 aa).

114–117 (SVLP) provides a ligand contact to (6S)-5,6,7,8-tetrahydrofolate.

The protein belongs to the Fmt family.

The catalysed reaction is L-methionyl-tRNA(fMet) + (6R)-10-formyltetrahydrofolate = N-formyl-L-methionyl-tRNA(fMet) + (6S)-5,6,7,8-tetrahydrofolate + H(+). Its function is as follows. Attaches a formyl group to the free amino group of methionyl-tRNA(fMet). The formyl group appears to play a dual role in the initiator identity of N-formylmethionyl-tRNA by promoting its recognition by IF2 and preventing the misappropriation of this tRNA by the elongation apparatus. In Bdellovibrio bacteriovorus (strain ATCC 15356 / DSM 50701 / NCIMB 9529 / HD100), this protein is Methionyl-tRNA formyltransferase.